The following is an 85-amino-acid chain: U4-theraphotoxin-Hhn1j (85 aa).

The signal sequence occupies residues methionine 1–alanine 22. Residues glutamate 23–arginine 48 constitute a propeptide that is removed on maturation. Disulfide bonds link cysteine 52-cysteine 66, cysteine 56-cysteine 77, and cysteine 71-cysteine 82.

The protein belongs to the neurotoxin 12 (Hwtx-2) family. 02 (Hwtx-2) subfamily. Expressed by the venom gland.

The protein resides in the secreted. Its function is as follows. Postsynaptic neurotoxin. This Cyriopagopus hainanus (Chinese bird spider) protein is U4-theraphotoxin-Hhn1j.